Here is a 94-residue protein sequence, read N- to C-terminus: Aspartyl/glutamyl-tRNA(Asn/Gln) amidotransferase subunit C (94 aa).

The disordered stretch occupies residues 72-94; that stretch reads PREKALQGAPEVSEGQFKVPRVV.

Belongs to the GatC family. Heterotrimer of A, B and C subunits.

The catalysed reaction is L-glutamyl-tRNA(Gln) + L-glutamine + ATP + H2O = L-glutaminyl-tRNA(Gln) + L-glutamate + ADP + phosphate + H(+). The enzyme catalyses L-aspartyl-tRNA(Asn) + L-glutamine + ATP + H2O = L-asparaginyl-tRNA(Asn) + L-glutamate + ADP + phosphate + 2 H(+). In terms of biological role, allows the formation of correctly charged Asn-tRNA(Asn) or Gln-tRNA(Gln) through the transamidation of misacylated Asp-tRNA(Asn) or Glu-tRNA(Gln) in organisms which lack either or both of asparaginyl-tRNA or glutaminyl-tRNA synthetases. The reaction takes place in the presence of glutamine and ATP through an activated phospho-Asp-tRNA(Asn) or phospho-Glu-tRNA(Gln). The chain is Aspartyl/glutamyl-tRNA(Asn/Gln) amidotransferase subunit C from Moorella thermoacetica (strain ATCC 39073 / JCM 9320).